A 202-amino-acid polypeptide reads, in one-letter code: dTTP/UTP pyrophosphatase (202 aa).

Asp-74 acts as the Proton acceptor in catalysis.

Belongs to the Maf family. YhdE subfamily. The cofactor is a divalent metal cation.

It is found in the cytoplasm. It carries out the reaction dTTP + H2O = dTMP + diphosphate + H(+). The enzyme catalyses UTP + H2O = UMP + diphosphate + H(+). In terms of biological role, nucleoside triphosphate pyrophosphatase that hydrolyzes dTTP and UTP. May have a dual role in cell division arrest and in preventing the incorporation of modified nucleotides into cellular nucleic acids. The sequence is that of dTTP/UTP pyrophosphatase from Methylococcus capsulatus (strain ATCC 33009 / NCIMB 11132 / Bath).